The sequence spans 105 residues: Heat shock protein HspQ (105 aa).

Belongs to the HspQ family.

Its subcellular location is the cytoplasm. Functionally, involved in the degradation of certain denaturated proteins, including DnaA, during heat shock stress. The polypeptide is Heat shock protein HspQ (Sodalis glossinidius (strain morsitans)).